Consider the following 188-residue polypeptide: Molybdopterin synthase catalytic subunit (188 aa).

The residue at position 20 (Ser-20) is a Phosphoserine. Substrate contacts are provided by residues 143-144 (HR), Lys-159, and 166-168 (KKE).

The protein belongs to the MoaE family. MOCS2B subfamily. As to quaternary structure, heterotetramer; composed of 2 small (MOCS2A) and 2 large (MOCS2B) subunits. As to expression, highest levels are found in heart and skeletal muscle. Lower levels are present in brain, kidney and pancreas. Very low levels are found in lung and peripheral blood leukocytes.

It is found in the cytoplasm. The protein localises to the cytosol. The enzyme catalyses 2 [molybdopterin-synthase sulfur-carrier protein]-C-terminal-Gly-aminoethanethioate + cyclic pyranopterin phosphate + H2O = molybdopterin + 2 [molybdopterin-synthase sulfur-carrier protein]-C-terminal Gly-Gly + 2 H(+). Its pathway is cofactor biosynthesis; molybdopterin biosynthesis. Catalytic subunit of the molybdopterin synthase complex, a complex that catalyzes the conversion of precursor Z into molybdopterin. Acts by mediating the incorporation of 2 sulfur atoms from thiocarboxylated MOCS2A into precursor Z to generate a dithiolene group. The sequence is that of Molybdopterin synthase catalytic subunit from Homo sapiens (Human).